A 566-amino-acid chain; its full sequence is Malate synthase, glyoxysomal (566 aa).

Arg179 (proton acceptor) is an active-site residue. Asp465 (proton donor) is an active-site residue. A Microbody targeting signal motif is present at residues 564 to 566 (SRL).

This sequence belongs to the malate synthase family.

It localises to the glyoxysome. The enzyme catalyses glyoxylate + acetyl-CoA + H2O = (S)-malate + CoA + H(+). Its pathway is carbohydrate metabolism; glyoxylate cycle; (S)-malate from isocitrate: step 2/2. In Raphanus sativus (Radish), this protein is Malate synthase, glyoxysomal (MLS).